We begin with the raw amino-acid sequence, 211 residues long: MTKVLFITANPNSAEGSFGMAVGEAFIEAYKNEHPQDEVVTIDLFNTTVPAIDADVFAAWGKFAAGEGFEALTEAQQQKVAAMNTNLETFMHADRYVFVTPMWNFSYPSVVKAYLDNLAIAGKTFKYTENGPVGLLEGKKALHIQATGGVYSEGPYAAVDFGRNHLKTVLGFIGVNETEYIAVEGMNANPEKAQEIKEAAIANARELAKRF.

Residue 102-105 participates in FMN binding; the sequence is MWNF.

It belongs to the azoreductase type 1 family. Homodimer. FMN is required as a cofactor.

It carries out the reaction 2 a quinone + NADH + H(+) = 2 a 1,4-benzosemiquinone + NAD(+). It catalyses the reaction N,N-dimethyl-1,4-phenylenediamine + anthranilate + 2 NAD(+) = 2-(4-dimethylaminophenyl)diazenylbenzoate + 2 NADH + 2 H(+). Functionally, quinone reductase that provides resistance to thiol-specific stress caused by electrophilic quinones. In terms of biological role, also exhibits azoreductase activity. Catalyzes the reductive cleavage of the azo bond in aromatic azo compounds to the corresponding amines. This chain is FMN-dependent NADH:quinone oxidoreductase 3, found in Bacillus anthracis.